The sequence spans 514 residues: Leucine-rich repeat-containing protein 14B (514 aa).

One copy of the LRR 1; degenerate repeat lies at 104–141 (RRRLRVADLTGIRDVQVQRCPCGRALGRWGRTQLLART). An LRR 2; degenerate repeat occupies 185-209 (RVHCPSFRADSLSPSQLLHVLRLAG). An LRR 4; degenerate repeat occupies 238-277 (FPRLASLTLPTKAFDAPPTYASTPDGEDPLLASIARELSK). LRR repeat units lie at residues 278–302 (MAQLTELSVAFSTLTGKIPTLLGPL), 303–334 (QTPLRVLDLANCALNHTDMAFLADCAHAAHLE), 335–350 (VLDLSGHNLVSLYPST), 359–386 (SRTLRILTLEECGIVDSHVGMLILGLSP), and 387–411 (CHRLRQLKFLGNPLSARALRRLFTA).

The protein belongs to the PRAME family. LRRC14 subfamily.

In Homo sapiens (Human), this protein is Leucine-rich repeat-containing protein 14B.